A 313-amino-acid chain; its full sequence is Monoglyceride lipase (313 aa).

The short motif at 121–125 is the GXSXG element; it reads GHSMG. Catalysis depends on Ser-123, which acts as the Nucleophile. Catalysis depends on charge relay system residues Asp-251 and His-281.

It belongs to the AB hydrolase superfamily. Monoacylglycerol lipase family.

The protein resides in the lipid droplet. Its subcellular location is the cytoplasm. It localises to the endoplasmic reticulum. It is found in the mitochondrion outer membrane. It carries out the reaction Hydrolyzes glycerol monoesters of long-chain fatty acids.. The enzyme catalyses a fatty acid ethyl ester + H2O = ethanol + a fatty acid + H(+). The catalysed reaction is 1-(9Z-octadecenoyl)-glycerol + H2O = glycerol + (9Z)-octadecenoate + H(+). It catalyses the reaction 2-(9Z-octadecenoyl)-glycerol + H2O = glycerol + (9Z)-octadecenoate + H(+). It carries out the reaction 1-hexadecanoylglycerol + H2O = glycerol + hexadecanoate + H(+). The enzyme catalyses 2-hexadecanoylglycerol + H2O = glycerol + hexadecanoate + H(+). The catalysed reaction is ethyl hexadecanoate + H2O = ethanol + hexadecanoate + H(+). It catalyses the reaction ethyl (9Z)-octadecenoate + H2O = ethanol + (9Z)-octadecenoate + H(+). It carries out the reaction ethyl (9Z)-hexadecenoate + H2O = (9Z)-hexadecenoate + ethanol + H(+). The enzyme catalyses ethyl octadecanoate + H2O = ethanol + octadecanoate + H(+). It participates in glycerolipid metabolism; triacylglycerol degradation. Converts monoacylglycerides (MAG) to free fatty acids and glycerol. Has a strong preference for monounsaturated monoglycerides. Required for efficient degradation of MAG, short-lived intermediates of glycerolipid metabolism which may also function as lipid signaling molecules. Controls inactivation of the signaling lipid N-palmitoylethanolamine (PEA). Involved in fatty acid ethyl ester (FAEE) catabolism. FAEEs are non-oxidative metabolites of ethanol that are transiently incorporated into lipid droplets (LDs). Their mobilization by LD-resident FAEE hydrolases facilitates a controlled metabolism of these potentially toxic lipid metabolites. The sequence is that of Monoglyceride lipase (YJU3) from Saccharomyces cerevisiae (strain ATCC 204508 / S288c) (Baker's yeast).